Reading from the N-terminus, the 338-residue chain is Ketol-acid reductoisomerase (NADP(+)) (338 aa).

Residues Met1–Thr181 enclose the KARI N-terminal Rossmann domain. NADP(+) contacts are provided by residues Tyr24–Gln27, Arg47, Ser50, Ser52, and Asp82–Gln85. His107 is an active-site residue. Position 133 (Gly133) interacts with NADP(+). The region spanning Ser182–Ile327 is the KARI C-terminal knotted domain. Residues Asp190, Glu194, Glu226, and Glu230 each coordinate Mg(2+). Position 251 (Ser251) interacts with substrate.

Belongs to the ketol-acid reductoisomerase family. Mg(2+) serves as cofactor.

The enzyme catalyses (2R)-2,3-dihydroxy-3-methylbutanoate + NADP(+) = (2S)-2-acetolactate + NADPH + H(+). It carries out the reaction (2R,3R)-2,3-dihydroxy-3-methylpentanoate + NADP(+) = (S)-2-ethyl-2-hydroxy-3-oxobutanoate + NADPH + H(+). The protein operates within amino-acid biosynthesis; L-isoleucine biosynthesis; L-isoleucine from 2-oxobutanoate: step 2/4. It functions in the pathway amino-acid biosynthesis; L-valine biosynthesis; L-valine from pyruvate: step 2/4. Functionally, involved in the biosynthesis of branched-chain amino acids (BCAA). Catalyzes an alkyl-migration followed by a ketol-acid reduction of (S)-2-acetolactate (S2AL) to yield (R)-2,3-dihydroxy-isovalerate. In the isomerase reaction, S2AL is rearranged via a Mg-dependent methyl migration to produce 3-hydroxy-3-methyl-2-ketobutyrate (HMKB). In the reductase reaction, this 2-ketoacid undergoes a metal-dependent reduction by NADPH to yield (R)-2,3-dihydroxy-isovalerate. The chain is Ketol-acid reductoisomerase (NADP(+)) from Magnetococcus marinus (strain ATCC BAA-1437 / JCM 17883 / MC-1).